The following is a 984-amino-acid chain: E3 ubiquitin-protein ligase BRE1A (984 aa).

A disordered region spans residues 1 to 34 (MSGAGNKRAAGEPGPSAPPEKKAGVEDSGTTVET). The stretch at 43–90 (TEELDIRTLQTKNRKLAEMLDQRQAIEDELREHIEKLERRQATDDASL) forms a coiled coil. The interval 128–150 (VVPEPEPDSDSNQERKDERERGE) is disordered. Residues 139–150 (NQERKDERERGE) are compositionally biased toward basic and acidic residues. Coiled coils occupy residues 236–378 (ADTL…VKET) and 429–907 (SLHK…TTKK). The interval 506–632 (SDLSKIRSRS…KHEDGRKKEA (127 aa)) is disordered. Residues 514-526 (RSGSALLQSQSST) are compositionally biased toward polar residues. Basic and acidic residues-rich tracts occupy residues 527–540 (EDTK…KQEP) and 558–632 (SEVK…KKEA). The RING-type zinc-finger motif lies at 931-970 (CPCCNMRKKDAVLTKCFHVFCFECVKTRYDTRQRKCPKCN).

The protein belongs to the BRE1 family. In terms of assembly, component of the RNF20/40 complex (also known as BRE1 complex).

It is found in the nucleus. The catalysed reaction is S-ubiquitinyl-[E2 ubiquitin-conjugating enzyme]-L-cysteine + [acceptor protein]-L-lysine = [E2 ubiquitin-conjugating enzyme]-L-cysteine + N(6)-ubiquitinyl-[acceptor protein]-L-lysine.. The protein operates within protein modification; protein ubiquitination. In terms of biological role, component of the RNF20/40 E3 ubiquitin-protein ligase complex that mediates monoubiquitination of 'Lys-120' of histone H2B (H2BK120ub1). H2BK120ub1 gives a specific tag for epigenetic transcriptional activation and is also prerequisite for histone H3 'Lys-4' and 'Lys-79' methylation (H3K4me and H3K79me, respectively). The protein is E3 ubiquitin-protein ligase BRE1A (RNF20) of Gallus gallus (Chicken).